The chain runs to 66 residues: uncharacterized protein (66 aa).

This is an uncharacterized protein from Chlamydia pneumoniae (Chlamydophila pneumoniae).